The sequence spans 291 residues: MSVLTTRAPAKINLTLHILGRRPGDGYHALESLVAFADVADTLELVPGPDLTLDISGPTAGPAGPLDDNLVLRAARHLAAGVDGLRLGAFRLHKQLPVAAGIGGGSSDAAAALRLLAELNGLALDHPAVIAAARATGADVPVCLDPRARMMRGAGEEIGPVLGLASLPAVLVNPGVPVSTAPVFKALGLAVGQRLDGAELPVVGASLNADAVLAVITPARNDLEAPALTVAPVIGEALALLRAQAGCRLARMSGSGATVFAIFSDDGAAETAAAAIRTAEPGWWVEPTRLA.

Lysine 11 is a catalytic residue. 97 to 107 (PVAAGIGGGSS) contributes to the ATP binding site. Aspartate 139 is a catalytic residue.

This sequence belongs to the GHMP kinase family. IspE subfamily.

It catalyses the reaction 4-CDP-2-C-methyl-D-erythritol + ATP = 4-CDP-2-C-methyl-D-erythritol 2-phosphate + ADP + H(+). It participates in isoprenoid biosynthesis; isopentenyl diphosphate biosynthesis via DXP pathway; isopentenyl diphosphate from 1-deoxy-D-xylulose 5-phosphate: step 3/6. Its function is as follows. Catalyzes the phosphorylation of the position 2 hydroxy group of 4-diphosphocytidyl-2C-methyl-D-erythritol. This is 4-diphosphocytidyl-2-C-methyl-D-erythritol kinase from Methylorubrum extorquens (strain CM4 / NCIMB 13688) (Methylobacterium extorquens).